Reading from the N-terminus, the 168-residue chain is Mitochondrial inner membrane protein Mpv17 (168 aa).

The next 4 membrane-spanning stretches (helical) occupy residues 12–29 (INVAAVMCLGDTISQFFF), 41–61 (RTLRFGIVGLVFVGPTLRRWY), 82–101 (MLVDQTLFAPPFTMAMSFLV), and 144–166 (LGYQVLYAQFIALVWNCYLSMIL).

This sequence belongs to the peroxisomal membrane protein PXMP2/4 family. As to quaternary structure, part of a larger complex that may be a homohexamer.

Its subcellular location is the mitochondrion inner membrane. Functionally, non-selective channel that modulates the membrane potential under normal conditions and oxidative stress, and is involved in mitochondrial homeostasis. Can translocate uridine, but not orotate, across a lipid membrane. Involved in maintenance of mitochondrial ultrastructure. May be involved in mitochondrial DNA (mtDNA) maintenance but does not appear to be directly involved in mitochondrial deoxynucleoside triphosphate (dNTP) pool homeostasis. May be involved in the regulation of reactive oxygen species metabolism and the control of oxidative phosphorylation. In Drosophila melanogaster (Fruit fly), this protein is Mitochondrial inner membrane protein Mpv17.